The chain runs to 70 residues: DNA-directed RNA polymerase subunit omega (70 aa).

The protein belongs to the RNA polymerase subunit omega family. In terms of assembly, the RNAP catalytic core consists of 2 alpha, 1 beta, 1 beta' and 1 omega subunit. When a sigma factor is associated with the core the holoenzyme is formed, which can initiate transcription.

The catalysed reaction is RNA(n) + a ribonucleoside 5'-triphosphate = RNA(n+1) + diphosphate. In terms of biological role, promotes RNA polymerase assembly. Latches the N- and C-terminal regions of the beta' subunit thereby facilitating its interaction with the beta and alpha subunits. The chain is DNA-directed RNA polymerase subunit omega from Thermoanaerobacter sp. (strain X514).